Reading from the N-terminus, the 713-residue chain is Ribosomal RNA large subunit methyltransferase K/L (713 aa).

Residues 43–154 form the THUMP domain; the sequence is LAYRITLWTR…NGVITIAMNF (112 aa).

Belongs to the methyltransferase superfamily. RlmKL family.

The protein localises to the cytoplasm. The enzyme catalyses guanosine(2445) in 23S rRNA + S-adenosyl-L-methionine = N(2)-methylguanosine(2445) in 23S rRNA + S-adenosyl-L-homocysteine + H(+). It carries out the reaction guanosine(2069) in 23S rRNA + S-adenosyl-L-methionine = N(2)-methylguanosine(2069) in 23S rRNA + S-adenosyl-L-homocysteine + H(+). Its function is as follows. Specifically methylates the guanine in position 2445 (m2G2445) and the guanine in position 2069 (m7G2069) of 23S rRNA. The protein is Ribosomal RNA large subunit methyltransferase K/L of Shewanella sp. (strain ANA-3).